A 117-amino-acid chain; its full sequence is DNA-directed RNA polymerase II subunit RPB11 (117 aa).

An N-acetylmethionine modification is found at M1.

This sequence belongs to the archaeal Rpo11/eukaryotic RPB11/RPC19 RNA polymerase subunit family. In terms of assembly, component of the RNA polymerase II (Pol II) core complex consisting of 12 subunits: a ten-subunit catalytic core composed of POLR2A/RPB1, POLR2B/RPB2, POLR2C/RPB3, POLR2I/RPB9, POLR2J/RPB11, POLR2E/RPABC1, POLR2F/RPABC2, POLR2H/RPABC3, POLR2K/RPABC4 and POLR2L/RPABC5 and a mobile stalk composed of two subunits POLR2D/RPB4 and POLR2G/RPB7, protruding from the core and functioning primarily in transcription initiation. Part of Pol II(G) complex, in which Pol II core associates with an additional subunit POLR2M; unlike conventional Pol II, Pol II(G) functions as a transcriptional repressor. Part of TBP-based Pol II pre-initiation complex (PIC), in which Pol II core assembles with general transcription factors and other specific initiation factors including GTF2E1, GTF2E2, GTF2F1, GTF2F2, TCEA1, ERCC2, ERCC3, GTF2H2, GTF2H3, GTF2H4, GTF2H5, GTF2A1, GTF2A2, GTF2B and TBP; this large multi-subunit PIC complex mediates DNA unwinding and targets Pol II core to the transcription start site where the first phosphodiester bond forms. Interacts with AATF. Interacts with PTPN6; this interaction promotes the recruitment of RNA pol II to the PCK1 promoter.

It localises to the nucleus. Core component of RNA polymerase II (Pol II), a DNA-dependent RNA polymerase which synthesizes mRNA precursors and many functional non-coding RNAs using the four ribonucleoside triphosphates as substrates. The polypeptide is DNA-directed RNA polymerase II subunit RPB11 (Polr2j) (Mus musculus (Mouse)).